Here is a 73-residue protein sequence, read N- to C-terminus: NAD(P)H-quinone oxidoreductase subunit L (73 aa).

Transmembrane regions (helical) follow at residues Leu7 to Phe27 and Val44 to Met64.

This sequence belongs to the complex I NdhL subunit family. As to quaternary structure, NDH-1 can be composed of about 15 different subunits; different subcomplexes with different compositions have been identified which probably have different functions.

The protein resides in the cellular thylakoid membrane. It carries out the reaction a plastoquinone + NADH + (n+1) H(+)(in) = a plastoquinol + NAD(+) + n H(+)(out). The enzyme catalyses a plastoquinone + NADPH + (n+1) H(+)(in) = a plastoquinol + NADP(+) + n H(+)(out). Functionally, NDH-1 shuttles electrons from an unknown electron donor, via FMN and iron-sulfur (Fe-S) centers, to quinones in the respiratory and/or the photosynthetic chain. The immediate electron acceptor for the enzyme in this species is believed to be plastoquinone. Couples the redox reaction to proton translocation, and thus conserves the redox energy in a proton gradient. Cyanobacterial NDH-1 also plays a role in inorganic carbon-concentration. This Synechococcus sp. (strain JA-3-3Ab) (Cyanobacteria bacterium Yellowstone A-Prime) protein is NAD(P)H-quinone oxidoreductase subunit L.